The chain runs to 364 residues: Cyclin-D3-2 (364 aa).

Residues 331–364 (PPGRPIKRGAAAATTADPLPADEESRDAWPPYAA) form a disordered region. Residues 340 to 349 (AAAATTADPL) show a composition bias toward low complexity.

This sequence belongs to the cyclin family. Cyclin D subfamily.

This Oryza sativa subsp. japonica (Rice) protein is Cyclin-D3-2 (CYCD3-2).